Here is a 398-residue protein sequence, read N- to C-terminus: Trans-2-enoyl-CoA reductase [NADH] (398 aa).

Residues 47 to 52, 74 to 75, 111 to 112, and 139 to 140 contribute to the NAD(+) site; these read GASSGF, YE, DA, and LA. Tyr-225 is a binding site for substrate. The active-site Proton donor is Tyr-235. NAD(+) contacts are provided by residues Lys-244 and 274–276; that span reads LVT.

It belongs to the TER reductase family. In terms of assembly, monomer.

The enzyme catalyses a 2,3-saturated acyl-CoA + NAD(+) = a (2E)-enoyl-CoA + NADH + H(+). Its pathway is lipid metabolism; fatty acid biosynthesis. In terms of biological role, involved in the fatty acid synthesis (FAS II). Catalyzes the reduction of the carbon-carbon double bond of crotonyl-CoA to yield butyryl-CoA. This chain is Trans-2-enoyl-CoA reductase [NADH], found in Clostridium acetobutylicum (strain ATCC 824 / DSM 792 / JCM 1419 / IAM 19013 / LMG 5710 / NBRC 13948 / NRRL B-527 / VKM B-1787 / 2291 / W).